The sequence spans 272 residues: NADPH-dependent 7-cyano-7-deazaguanine reductase (272 aa).

Substrate is bound at residue 82 to 84 (IES). Residue 84–85 (SK) coordinates NADPH. Residue Cys-178 is the Thioimide intermediate of the active site. Catalysis depends on Asp-185, which acts as the Proton donor. 217–218 (HE) lines the substrate pocket. Position 246-247 (246-247 (RG)) interacts with NADPH.

This sequence belongs to the GTP cyclohydrolase I family. QueF type 2 subfamily. In terms of assembly, homodimer.

It localises to the cytoplasm. The catalysed reaction is 7-aminomethyl-7-carbaguanine + 2 NADP(+) = 7-cyano-7-deazaguanine + 2 NADPH + 3 H(+). The protein operates within tRNA modification; tRNA-queuosine biosynthesis. Its function is as follows. Catalyzes the NADPH-dependent reduction of 7-cyano-7-deazaguanine (preQ0) to 7-aminomethyl-7-deazaguanine (preQ1). This is NADPH-dependent 7-cyano-7-deazaguanine reductase from Stenotrophomonas maltophilia (strain K279a).